A 226-amino-acid chain; its full sequence is Ras-related protein RGP1 (226 aa).

25–32 (GDSAVGKS) contacts GTP. The Effector region signature appears at 47–55 (SKATIGVEF). Residues 73-77 (DTAGQ) and 131-134 (NKSD) contribute to the GTP site. Residues Cys-223 and Cys-224 are each lipidated (S-geranylgeranyl cysteine).

It belongs to the small GTPase superfamily. Rab family.

It localises to the cell membrane. May play an important role in plant growth and development. This is Ras-related protein RGP1 (RGP1) from Oryza sativa subsp. japonica (Rice).